Consider the following 211-residue polypeptide: Intermembrane phospholipid transport system binding protein MlaC (211 aa).

Residues 1–21 form the signal peptide; it reads MFKRLMMVALLVIAPLSAATA.

Belongs to the MlaC/ttg2D family. Interacts with the MlaA-OmpF outer membrane complex and with the inner membrane ABC transporter complex MlaFEDB, via direct interaction with MlaD.

It is found in the periplasm. Functionally, involved in a phospholipid transport pathway that maintains lipid asymmetry in the outer membrane by retrograde trafficking of phospholipids from the outer membrane to the inner membrane. May transfer phospholipid across the periplasmic space and deliver it to the MlaFEDB complex at the inner membrane. This Escherichia coli (strain K12) protein is Intermembrane phospholipid transport system binding protein MlaC.